A 1203-amino-acid chain; its full sequence is Plasma membrane calcium-transporting ATPase 4 (1203 aa).

At M1–T92 the chain is on the cytoplasmic side. S13 bears the Phosphoserine mark. The helical transmembrane segment at F93–A113 threads the bilayer. Topologically, residues I114–I150 are extracellular. The helical transmembrane segment at E151 to W171 threads the bilayer. Residues S172–L356 are Cytoplasmic-facing. Residues D294–V319 are disordered. Residues S328 and S334 each carry the phosphoserine modification. The tract at residues E330–K349 is disordered. Over residues S334 to K349 the composition is skewed to basic and acidic residues. A helical transmembrane segment spans residues T357–L376. The Extracellular portion of the chain corresponds to I377 to F409. The helical transmembrane segment at F410–L427 threads the bilayer. Topologically, residues A428 to I840 are cytoplasmic. D465 functions as the 4-aspartylphosphate intermediate in the catalytic mechanism. Mg(2+)-binding residues include D785 and D789. Residues S841–S860 traverse the membrane as a helical segment. The Extracellular portion of the chain corresponds to G861 to L870. A helical transmembrane segment spans residues K871–A891. Residues T892–L911 lie on the Cytoplasmic side of the membrane. Residues I912–L934 form a helical membrane-spanning segment. Over V935–L952 the chain is Extracellular. Residues N953–N974 form a helical membrane-spanning segment. At E975–R993 the chain is on the cytoplasmic side. The chain crosses the membrane as a helical span at residues N994–G1015. Over G1016–T1025 the chain is Extracellular. The chain crosses the membrane as a helical span at residues M1026–S1047. The Cytoplasmic segment spans residues A1048 to V1203. 2 positions are modified to phosphoserine: S1064 and S1070. The segment at L1086–Q1103 is calmodulin-binding subdomain A. The residue at position 1102 (T1102) is a Phosphothreonine; by PKC. Phosphoserine is present on Q1103. The calmodulin-binding subdomain B stretch occupies residues I1104–F1113. Phosphoserine occurs at positions 1114, 1115, 1126, and 1144.

This sequence belongs to the cation transport ATPase (P-type) (TC 3.A.3) family. Type IIB subfamily. In terms of assembly, interacts with PDZD11. Interacts with SLC35G1 and STIM1. Interacts with calmodulin. Ubiquitously expressed. Not detected in liver. The highest levels are found in uterus and stomach. Isoform XA is found in uterus, brain, stomach, small intestine, colon and pancreas. Isoform XB is found in uterus, skeletal muscle, lung, kidney, spleen, stomach, small intestine and pancreas. Isoform ZA is found in testis and isoform ZB is found in testis and heart.

The protein localises to the cell membrane. It localises to the cell projection. The protein resides in the cilium. It is found in the flagellum membrane. It catalyses the reaction Ca(2+)(in) + ATP + H2O = Ca(2+)(out) + ADP + phosphate + H(+). Its activity is regulated as follows. Activated by calcium/calmodulin. Its function is as follows. Calcium/calmodulin-regulated and magnesium-dependent enzyme that catalyzes the hydrolysis of ATP coupled with the transport of calcium out of the cell. By regulating sperm cell calcium homeostasis, may play a role in sperm motility. In Rattus norvegicus (Rat), this protein is Plasma membrane calcium-transporting ATPase 4.